The following is a 322-amino-acid chain: Adenine deaminase (322 aa).

3 residues coordinate Zn(2+): His-11, His-13, and His-189. Residue Glu-192 is the Proton donor of the active site. Residue Asp-270 participates in Zn(2+) binding. Asp-271 is a binding site for substrate.

It belongs to the metallo-dependent hydrolases superfamily. Adenosine and AMP deaminases family. Adenine deaminase type 2 subfamily. Zn(2+) serves as cofactor.

The enzyme catalyses adenine + H2O + H(+) = hypoxanthine + NH4(+). Functionally, catalyzes the hydrolytic deamination of adenine to hypoxanthine. Plays an important role in the purine salvage pathway and in nitrogen catabolism. The polypeptide is Adenine deaminase (Rhizobium etli (strain ATCC 51251 / DSM 11541 / JCM 21823 / NBRC 15573 / CFN 42)).